The sequence spans 208 residues: MVNNRVQTLLNQLRAQGIKDERVLEAISRVPREKFVDEAFEHKAWENVALPIGSGQTISQPYMVARMTELLTLTPASRVLEIGTGSGYQTAILAHLVHHVCSVERIKSLQWHARRRLKQLDLHNISTRHGDGWQGWQARAPFDAIIVTAAPPEIPTALLSQLDEGGILVLPVGDEQQVLKRVRRRGSEFIIDTVEAVRFVPLVKGELA.

Ser59 is a catalytic residue.

This sequence belongs to the methyltransferase superfamily. L-isoaspartyl/D-aspartyl protein methyltransferase family.

It is found in the cytoplasm. The catalysed reaction is [protein]-L-isoaspartate + S-adenosyl-L-methionine = [protein]-L-isoaspartate alpha-methyl ester + S-adenosyl-L-homocysteine. Catalyzes the methyl esterification of L-isoaspartyl residues in peptides and proteins that result from spontaneous decomposition of normal L-aspartyl and L-asparaginyl residues. It plays a role in the repair and/or degradation of damaged proteins. In Cronobacter sakazakii (strain ATCC BAA-894) (Enterobacter sakazakii), this protein is Protein-L-isoaspartate O-methyltransferase.